Consider the following 118-residue polypeptide: Large ribosomal subunit protein uL18 (118 aa).

The protein belongs to the universal ribosomal protein uL18 family. Part of the 50S ribosomal subunit; part of the 5S rRNA/L5/L18/L25 subcomplex. Contacts the 5S and 23S rRNAs.

Functionally, this is one of the proteins that bind and probably mediate the attachment of the 5S RNA into the large ribosomal subunit, where it forms part of the central protuberance. In Campylobacter jejuni subsp. doylei (strain ATCC BAA-1458 / RM4099 / 269.97), this protein is Large ribosomal subunit protein uL18.